The primary structure comprises 165 residues: Mediator of RNA polymerase II transcription subunit 10 (165 aa).

Disordered stretches follow at residues 54–81 and 143–165; these read SLHTRDDPTASTTAPNQYQSTNPNDPAL and LRGEVDKVIQATGGKKQSERERG. Polar residues predominate over residues 62–77; the sequence is TASTTAPNQYQSTNPN.

Belongs to the Mediator complex subunit 10 family. As to quaternary structure, component of the Mediator complex.

It is found in the nucleus. Its function is as follows. Component of the Mediator complex, a coactivator involved in the regulated transcription of nearly all RNA polymerase II-dependent genes. Mediator functions as a bridge to convey information from gene-specific regulatory proteins to the basal RNA polymerase II transcription machinery. Mediator is recruited to promoters by direct interactions with regulatory proteins and serves as a scaffold for the assembly of a functional preinitiation complex with RNA polymerase II and the general transcription factors. The sequence is that of Mediator of RNA polymerase II transcription subunit 10 (nut2) from Emericella nidulans (strain FGSC A4 / ATCC 38163 / CBS 112.46 / NRRL 194 / M139) (Aspergillus nidulans).